The primary structure comprises 153 residues: MSIEINNESAIEVDEPVIQRLVTYALDTLHVHPDAELAIVMVDEGAMEQLHVQWMDEPGPTDVLSFPMDELRPGTEDRPTPAGLLGDIVVCPQVAAEQAVTAGHSTMEEILLLTAHGILHLLGFDHAEPDEEREMFGLQRDILIGFAMSERGR.

Zn(2+)-binding residues include His116, His120, and His126.

This sequence belongs to the endoribonuclease YbeY family. It depends on Zn(2+) as a cofactor.

The protein localises to the cytoplasm. Single strand-specific metallo-endoribonuclease involved in late-stage 70S ribosome quality control and in maturation of the 3' terminus of the 16S rRNA. The protein is Endoribonuclease YbeY of Clavibacter michiganensis subsp. michiganensis (strain NCPPB 382).